Reading from the N-terminus, the 464-residue chain is MARTHLLFLLFVLLSLATSSTSTKEQEEDRIKALPGQPKVGFSQFSGYVTVNESHGRSLFYWLTESSSHSPHTKPLLLWLNGGPGCSSIAYGASEEIGPFRISKTGCNLYLNNFSWNTEANLLFLESPVGVGFSYTNTSSDFEESGDERTAQENLIFLISWMSRFPQYRYRDFYIVGESYAGHYVPQLAQKIHEYNNAYKNPVINLKGFMVGNPEMDKNNDRLGTITYWWSHAMISDASYNRILKNCDFTADRFSKECDSAIYVAAADFGDIDQYSIYTPKCVPPQDQTNQTKFEQMMQMHTTKRFLEDQYDPCTENYAEIYYNRPEVQRAMHANHTAIPYKWTACSDSVFNNWNWRDSDNSMLPIYKELIAAGLRIWVYSGDTDSVIPVTATRYSLGKLNLRVKTRWYPWYSGNQVGGRTEVYEGLTFVTVRGAGHEVPFFQPQSALILLRSFLAGNELSRSY.

A signal peptide spans 1–22; it reads MARTHLLFLLFVLLSLATSSTS. Residues Asn-52, Asn-113, and Asn-137 are each glycosylated (N-linked (GlcNAc...) asparagine). 3 cysteine pairs are disulfide-bonded: Cys-86–Cys-346, Cys-247–Cys-258, and Cys-282–Cys-314. Ser-179 is an active-site residue. 2 N-linked (GlcNAc...) asparagine glycosylation sites follow: Asn-290 and Asn-335. Residues Asp-385 and His-437 contribute to the active site.

Belongs to the peptidase S10 family. Expression not detected.

The protein resides in the secreted. Functionally, probable carboxypeptidase. This Arabidopsis thaliana (Mouse-ear cress) protein is Serine carboxypeptidase-like 22 (SCPL22).